Consider the following 314-residue polypeptide: Acetyl-coenzyme A carboxylase carboxyl transferase subunit alpha (314 aa).

One can recognise a CoA carboxyltransferase C-terminal domain in the interval Arg38 to Ala292.

Belongs to the AccA family. As to quaternary structure, acetyl-CoA carboxylase is a heterohexamer composed of biotin carboxyl carrier protein (AccB), biotin carboxylase (AccC) and two subunits each of ACCase subunit alpha (AccA) and ACCase subunit beta (AccD).

The protein localises to the cytoplasm. It carries out the reaction N(6)-carboxybiotinyl-L-lysyl-[protein] + acetyl-CoA = N(6)-biotinyl-L-lysyl-[protein] + malonyl-CoA. It functions in the pathway lipid metabolism; malonyl-CoA biosynthesis; malonyl-CoA from acetyl-CoA: step 1/1. Its function is as follows. Component of the acetyl coenzyme A carboxylase (ACC) complex. First, biotin carboxylase catalyzes the carboxylation of biotin on its carrier protein (BCCP) and then the CO(2) group is transferred by the carboxyltransferase to acetyl-CoA to form malonyl-CoA. This Erythrobacter litoralis (strain HTCC2594) protein is Acetyl-coenzyme A carboxylase carboxyl transferase subunit alpha.